Reading from the N-terminus, the 281-residue chain is Src-like-adapter (281 aa).

The segment at 1–20 (MGNSMKSTSPPSERPLSSSE) is disordered. A lipid anchor (N-myristoyl glycine) is attached at glycine 2. Residues 7 to 20 (STSPPSERPLSSSE) are compositionally biased toward low complexity. Positions 22 to 82 (LESDFLAVLT…PGICVARVYH (61 aa)) constitute an SH3 domain. In terms of domain architecture, SH2 spans 84 to 175 (WLFEGLGRDK…GLCCVLTTPC (92 aa)). The tract at residues 190–281 (CTSPGSPVTL…FFSAPQYFED (92 aa)) is SLA C-terminal. The residue at position 258 (serine 258) is a Phosphoserine. Tyrosine 278 bears the Phosphotyrosine mark.

Homodimer. Interacts with phosphorylated CBL, SYK and LAT. Homodimerization and interaction with phosphorylated CBL occurs via its C-terminal domain. Interacts with PDGFRB and EPHA2. Interacts with phosphorylated proteins ZAP70; CD3Z; VAV1 and LCP2 via its SH2 domain. In terms of tissue distribution, predominantly expressed in lymphoid tissues. Highly expressed in spleen, thymus and lymph nodes. Weakly expressed in lung and brain. Expressed in T-cells and at low level in B-cells.

The protein localises to the cytoplasm. It localises to the endosome. Adapter protein, which negatively regulates T-cell receptor (TCR) signaling. Inhibits T-cell antigen-receptor induced activation of nuclear factor of activated T-cells. Involved in the negative regulation of positive selection and mitosis of T-cells. May act by linking signaling proteins such as ZAP70 with CBL, leading to a CBL dependent degradation of signaling proteins. The polypeptide is Src-like-adapter (Sla) (Mus musculus (Mouse)).